A 342-amino-acid polypeptide reads, in one-letter code: Sesquiterpene synthase MBR_09977 (342 aa).

D91 and D96 together coordinate Mg(2+). Positions 91-96 (DDLFVD) match the DDXXXD motif motif. R184 contributes to the substrate binding site. Mg(2+) is bound by residues N230, S234, and E238.

It belongs to the terpene synthase family. The cofactor is Mg(2+).

It carries out the reaction (2E,6E)-farnesyl diphosphate + H2O = (+)-corvol ether B + diphosphate. The catalysed reaction is (2E,6E)-farnesyl diphosphate + H2O = (+)-corvol ether A + diphosphate. Its function is as follows. Terpene synthase that catalyzes the conversion of (2E,6E)-farnesyl diphosphate (FPP) into sesquiterpenes which are important for fungi-environment interactions. Produces a mixture consisting of 8 sesquiterpenes including corvol ethers A and B, as well as traces of epizonarene, gamma-cadinene, delta-cadinene, alpha-cadinene, alpha-cadinol, and an unidentified sesquiterpene. The major product is corvol ether A. This Metarhizium brunneum (strain ARSEF 3297) protein is Sesquiterpene synthase MBR_09977.